Consider the following 295-residue polypeptide: uncharacterized protein (295 aa).

Residues Leu2 to Val226 enclose the ABC transporter domain. Gly34–Thr41 contacts ATP.

The protein belongs to the ABC transporter superfamily.

This is an uncharacterized protein from Bacillus subtilis (strain 168).